A 302-amino-acid chain; its full sequence is uncharacterized protein (302 aa).

7 helical membrane passes run 25–45 (SFIF…LQIF), 58–78 (FSYL…VIAL), 104–124 (IQVG…WMFL), 158–178 (YGLL…ATVL), 182–202 (FAWA…QYVP), 215–235 (ALSI…GYLL), and 247–267 (MMYI…MFYL). A PQ-loop domain is found at 175-245 (ATVLSSNFAW…SRLPGTNWTT (71 aa)).

The protein resides in the membrane. This is an uncharacterized protein from Schizosaccharomyces pombe (strain 972 / ATCC 24843) (Fission yeast).